The primary structure comprises 320 residues: Lipoyl synthase (320 aa).

Residues 1–11 are compositionally biased toward polar residues; that stretch reads MGGMNDLSSTP. A disordered region spans residues 1–24; that stretch reads MGGMNDLSSTPAPEGDRPARQRKP. Residues 14 to 24 are compositionally biased toward basic and acidic residues; the sequence is EGDRPARQRKP. Residues Cys53, Cys58, Cys64, Cys79, Cys83, Cys86, and Ser293 each contribute to the [4Fe-4S] cluster site. The Radical SAM core domain maps to 65-282; it reads WTKKHATVMI…GAIARAKGFL (218 aa).

Belongs to the radical SAM superfamily. Lipoyl synthase family. It depends on [4Fe-4S] cluster as a cofactor.

Its subcellular location is the cytoplasm. It carries out the reaction [[Fe-S] cluster scaffold protein carrying a second [4Fe-4S](2+) cluster] + N(6)-octanoyl-L-lysyl-[protein] + 2 oxidized [2Fe-2S]-[ferredoxin] + 2 S-adenosyl-L-methionine + 4 H(+) = [[Fe-S] cluster scaffold protein] + N(6)-[(R)-dihydrolipoyl]-L-lysyl-[protein] + 4 Fe(3+) + 2 hydrogen sulfide + 2 5'-deoxyadenosine + 2 L-methionine + 2 reduced [2Fe-2S]-[ferredoxin]. The protein operates within protein modification; protein lipoylation via endogenous pathway; protein N(6)-(lipoyl)lysine from octanoyl-[acyl-carrier-protein]: step 2/2. Functionally, catalyzes the radical-mediated insertion of two sulfur atoms into the C-6 and C-8 positions of the octanoyl moiety bound to the lipoyl domains of lipoate-dependent enzymes, thereby converting the octanoylated domains into lipoylated derivatives. This chain is Lipoyl synthase, found in Erythrobacter litoralis (strain HTCC2594).